The sequence spans 191 residues: Pyridoxal 5'-phosphate synthase subunit PdxT (191 aa).

Gly46 to Ser48 lines the L-glutamine pocket. Catalysis depends on Cys75, which acts as the Nucleophile. Residues Arg101 and Ile129 to Arg130 each bind L-glutamine. Active-site charge relay system residues include His165 and Glu167.

This sequence belongs to the glutaminase PdxT/SNO family. In terms of assembly, in the presence of PdxS, forms a dodecamer of heterodimers. Only shows activity in the heterodimer.

The catalysed reaction is aldehydo-D-ribose 5-phosphate + D-glyceraldehyde 3-phosphate + L-glutamine = pyridoxal 5'-phosphate + L-glutamate + phosphate + 3 H2O + H(+). It catalyses the reaction L-glutamine + H2O = L-glutamate + NH4(+). It functions in the pathway cofactor biosynthesis; pyridoxal 5'-phosphate biosynthesis. Its function is as follows. Catalyzes the hydrolysis of glutamine to glutamate and ammonia as part of the biosynthesis of pyridoxal 5'-phosphate. The resulting ammonia molecule is channeled to the active site of PdxS. This chain is Pyridoxal 5'-phosphate synthase subunit PdxT, found in Staphylococcus saprophyticus subsp. saprophyticus (strain ATCC 15305 / DSM 20229 / NCIMB 8711 / NCTC 7292 / S-41).